Consider the following 282-residue polypeptide: Endochitinase 4 (282 aa).

Positions 1-282 (GAKNGVHPPL…TWSINWDGSK (282 aa)) constitute a GH18 domain. The active-site Proton donor is the E112. Residue N265 is glycosylated (N-linked (GlcNAc...) asparagine).

Belongs to the glycosyl hydrolase 18 family. Chitinase class V subfamily.

The protein localises to the secreted. It carries out the reaction Random endo-hydrolysis of N-acetyl-beta-D-glucosaminide (1-&gt;4)-beta-linkages in chitin and chitodextrins.. Its function is as follows. Secreted chitinase involved in the degradation of chitin, a component of the cell walls of fungi and exoskeletal elements of some animals (including worms and arthropods). Participates in the infection process and directly acts in the penetration process of the host cuticle. The chain is Endochitinase 4 (chi4) from Metarhizium anisopliae (Entomophthora anisopliae).